The primary structure comprises 345 residues: Biotin synthase (345 aa).

Positions 49 to 276 constitute a Radical SAM core domain; it reads NQVQMSTLLS…ASFVRLSAGR (228 aa). Residues C64, C68, and C71 each coordinate [4Fe-4S] cluster. Residues C108, C139, C199, and R271 each coordinate [2Fe-2S] cluster.

Belongs to the radical SAM superfamily. Biotin synthase family. In terms of assembly, homodimer. Requires [4Fe-4S] cluster as cofactor. [2Fe-2S] cluster is required as a cofactor.

It carries out the reaction (4R,5S)-dethiobiotin + (sulfur carrier)-SH + 2 reduced [2Fe-2S]-[ferredoxin] + 2 S-adenosyl-L-methionine = (sulfur carrier)-H + biotin + 2 5'-deoxyadenosine + 2 L-methionine + 2 oxidized [2Fe-2S]-[ferredoxin]. The protein operates within cofactor biosynthesis; biotin biosynthesis; biotin from 7,8-diaminononanoate: step 2/2. Functionally, catalyzes the conversion of dethiobiotin (DTB) to biotin by the insertion of a sulfur atom into dethiobiotin via a radical-based mechanism. This is Biotin synthase from Nitrosococcus oceani (strain ATCC 19707 / BCRC 17464 / JCM 30415 / NCIMB 11848 / C-107).